Here is a 454-residue protein sequence, read N- to C-terminus: Allantoinase (454 aa).

Zn(2+) is bound by residues His-60, His-62, Lys-147, His-183, His-239, and Asp-312. The residue at position 147 (Lys-147) is an N6-carboxylysine.

The protein belongs to the metallo-dependent hydrolases superfamily. Allantoinase family. As to quaternary structure, homotetramer. It depends on Zn(2+) as a cofactor. Post-translationally, carboxylation allows a single lysine to coordinate two zinc ions.

It catalyses the reaction (S)-allantoin + H2O = allantoate + H(+). Its pathway is nitrogen metabolism; (S)-allantoin degradation; allantoate from (S)-allantoin: step 1/1. Functionally, catalyzes the conversion of allantoin (5-ureidohydantoin) to allantoic acid by hydrolytic cleavage of the five-member hydantoin ring. In Rubrobacter xylanophilus (strain DSM 9941 / JCM 11954 / NBRC 16129 / PRD-1), this protein is Allantoinase.